The primary structure comprises 286 residues: Probable tRNA(His) guanylyltransferase (286 aa).

The Mg(2+) site is built by aspartate 29, glycine 30, and aspartate 76. GTP-binding positions include 29–34 (DGKKFH) and 75–76 (SD).

This sequence belongs to the tRNA(His) guanylyltransferase family. Requires Mg(2+) as cofactor.

The enzyme catalyses a 5'-end ribonucleotide-tRNA(His) + GTP + ATP + H2O = a 5'-end phospho-guanosine-ribonucleotide-tRNA(His) + AMP + 2 diphosphate + H(+). In terms of biological role, adds a GMP to the 5'-end of tRNA(His) after transcription and RNase P cleavage. This chain is Probable tRNA(His) guanylyltransferase, found in Drosophila melanogaster (Fruit fly).